A 476-amino-acid polypeptide reads, in one-letter code: Aspartyl/glutamyl-tRNA(Asn/Gln) amidotransferase subunit B (476 aa).

Belongs to the GatB/GatE family. GatB subfamily. In terms of assembly, heterotrimer of A, B and C subunits.

The catalysed reaction is L-glutamyl-tRNA(Gln) + L-glutamine + ATP + H2O = L-glutaminyl-tRNA(Gln) + L-glutamate + ADP + phosphate + H(+). It catalyses the reaction L-aspartyl-tRNA(Asn) + L-glutamine + ATP + H2O = L-asparaginyl-tRNA(Asn) + L-glutamate + ADP + phosphate + 2 H(+). Its function is as follows. Allows the formation of correctly charged Asn-tRNA(Asn) or Gln-tRNA(Gln) through the transamidation of misacylated Asp-tRNA(Asn) or Glu-tRNA(Gln) in organisms which lack either or both of asparaginyl-tRNA or glutaminyl-tRNA synthetases. The reaction takes place in the presence of glutamine and ATP through an activated phospho-Asp-tRNA(Asn) or phospho-Glu-tRNA(Gln). The polypeptide is Aspartyl/glutamyl-tRNA(Asn/Gln) amidotransferase subunit B (Neisseria meningitidis serogroup B (strain ATCC BAA-335 / MC58)).